Reading from the N-terminus, the 410-residue chain is Inositol hexakisphosphate kinase 3 (410 aa).

Residue 211 to 219 coordinates substrate; that stretch reads PCVLDLKMG. The segment at 333–358 is disordered; that stretch reads QEPPERAPGSPHPHEAPQAAHGSSPG.

The protein belongs to the inositol phosphokinase (IPK) family. As to expression, detected in brain.

It is found in the cytoplasm. It catalyses the reaction 1D-myo-inositol hexakisphosphate + ATP = 5-diphospho-1D-myo-inositol 1,2,3,4,6-pentakisphosphate + ADP. It carries out the reaction 1-diphospho-1D-myo-inositol 2,3,4,5,6-pentakisphosphate + ATP + H(+) = 1,5-bis(diphospho)-1D-myo-inositol 2,3,4,6-tetrakisphosphate + ADP. Converts inositol hexakisphosphate (InsP6) to diphosphoinositol pentakisphosphate (InsP7/PP-InsP5). Converts 1,3,4,5,6-pentakisphosphate (InsP5) to PP-InsP4. The chain is Inositol hexakisphosphate kinase 3 (IP6K3) from Homo sapiens (Human).